The sequence spans 492 residues: Heat shock factor protein 4 (492 aa).

A DNA-binding region spans residues 17-122 (VPAFLGKLWA…LLERVRRKVP (106 aa)). Residues 129–203 (SRWRPEDLSR…GPLQTGPSST (75 aa)) form a hydrophobic repeat HR-A/B region. The segment at 245-322 (LPETTLGLSP…ECDFCVTAPP (78 aa)) is interactions with DUSP26, MAPK1 and MAPK2. Residues 263-282 (SDIPEDSPSPEGHRLSPSGG) are disordered. A Glycyl lysine isopeptide (Lys-Gly) (interchain with G-Cter in SUMO) cross-link involves residue Lys293. Ser298 carries the post-translational modification Phosphoserine. Positions 337–378 (GSYSPEGPRSVQQPEPRGPREVPDRGTLGLDRGNRSPESLLP) are disordered. The tract at residues 364-389 (LGLDRGNRSPESLLPPMLLRPAPETL) is hydrophobic repeat HR-C.

It belongs to the HSF family. Homotrimer. Exhibits constitutive DNA binding and forms trimers even in the absence of stress. Interacts with ALKBH4, DUSP26, MAPK1, MAPK2, MAPK8 and MAP kinase p38. Post-translationally, phosphorylated mainly on serine residues. Phosphorylation on Ser-298 promotes sumoylation on Lys-293. Isoform HSF4B is constitutively sumoylated. Sumoylation represses the transcriptional activity and is promoted by phosphorylation on Ser-298. HSFA is not sumoylated. As to expression, preferentially expressed in brain and lung. Also found in the eye. Slightly detected in liver and skeletal muscle. Isoform B is the major species in various tissues.

It localises to the nucleus. Its function is as follows. Heat-shock transcription factor that specifically binds heat shock promoter elements (HSE). Required for denucleation and organelle rupture and degradation that occur during eye lens terminal differentiation, when fiber cells that compose the lens degrade all membrane-bound organelles in order to provide lens with transparency to allow the passage of light. In this process, may regulate denucleation of lens fiber cells in part by activating DNASE2B transcription. May be involved in DNA repair through the transcriptional regulation of RAD51. May up-regulate p53/TP53 protein in eye lens fiber cells, possibly through protein stabilization. In the eye lens, controls the expression of alpha-crystallin B chain/CRYAB and consequently may be involved in the regulation of lysosomal acidification. Transcriptional repressor. Functionally, transcriptional activator. The protein is Heat shock factor protein 4 (Hsf4) of Mus musculus (Mouse).